The primary structure comprises 962 residues: Glycine dehydrogenase (decarboxylating) (962 aa).

K709 carries the post-translational modification N6-(pyridoxal phosphate)lysine.

The protein belongs to the GcvP family. In terms of assembly, the glycine cleavage system is composed of four proteins: P, T, L and H. Pyridoxal 5'-phosphate serves as cofactor.

The catalysed reaction is N(6)-[(R)-lipoyl]-L-lysyl-[glycine-cleavage complex H protein] + glycine + H(+) = N(6)-[(R)-S(8)-aminomethyldihydrolipoyl]-L-lysyl-[glycine-cleavage complex H protein] + CO2. Functionally, the glycine cleavage system catalyzes the degradation of glycine. The P protein binds the alpha-amino group of glycine through its pyridoxal phosphate cofactor; CO(2) is released and the remaining methylamine moiety is then transferred to the lipoamide cofactor of the H protein. This is Glycine dehydrogenase (decarboxylating) from Shewanella sediminis (strain HAW-EB3).